The sequence spans 188 residues: Elongation factor P (188 aa).

This sequence belongs to the elongation factor P family.

The protein localises to the cytoplasm. Its pathway is protein biosynthesis; polypeptide chain elongation. Involved in peptide bond synthesis. Stimulates efficient translation and peptide-bond synthesis on native or reconstituted 70S ribosomes in vitro. Probably functions indirectly by altering the affinity of the ribosome for aminoacyl-tRNA, thus increasing their reactivity as acceptors for peptidyl transferase. This chain is Elongation factor P, found in Paramagnetospirillum magneticum (strain ATCC 700264 / AMB-1) (Magnetospirillum magneticum).